The chain runs to 1375 residues: DNA-directed RNA polymerase subunit beta' (1375 aa).

Residues C70, C72, C85, and C88 each coordinate Zn(2+). Residues D460, D462, and D464 each contribute to the Mg(2+) site. Zn(2+) is bound by residues C800, C874, C881, and C884.

The protein belongs to the RNA polymerase beta' chain family. As to quaternary structure, the RNAP catalytic core consists of 2 alpha, 1 beta, 1 beta' and 1 omega subunit. When a sigma factor is associated with the core the holoenzyme is formed, which can initiate transcription. The cofactor is Mg(2+). Requires Zn(2+) as cofactor.

The enzyme catalyses RNA(n) + a ribonucleoside 5'-triphosphate = RNA(n+1) + diphosphate. Its function is as follows. DNA-dependent RNA polymerase catalyzes the transcription of DNA into RNA using the four ribonucleoside triphosphates as substrates. The polypeptide is DNA-directed RNA polymerase subunit beta' (Bdellovibrio bacteriovorus (strain ATCC 15356 / DSM 50701 / NCIMB 9529 / HD100)).